We begin with the raw amino-acid sequence, 282 residues long: Ribosomal protein L11 methyltransferase (282 aa).

S-adenosyl-L-methionine-binding residues include Thr-133, Gly-154, Asp-175, and Asn-216.

This sequence belongs to the methyltransferase superfamily. PrmA family.

The protein resides in the cytoplasm. The enzyme catalyses L-lysyl-[protein] + 3 S-adenosyl-L-methionine = N(6),N(6),N(6)-trimethyl-L-lysyl-[protein] + 3 S-adenosyl-L-homocysteine + 3 H(+). Functionally, methylates ribosomal protein L11. The sequence is that of Ribosomal protein L11 methyltransferase from Campylobacter jejuni subsp. doylei (strain ATCC BAA-1458 / RM4099 / 269.97).